Consider the following 158-residue polypeptide: UPF0266 membrane protein YobD (158 aa).

Helical transmembrane passes span 6–26 (LVLI…QFIM), 45–65 (IDSV…VTNH), and 67–87 (ALIT…IFWI).

This sequence belongs to the UPF0266 family.

The protein resides in the cell inner membrane. The chain is UPF0266 membrane protein YobD from Shigella boydii serotype 4 (strain Sb227).